A 404-amino-acid chain; its full sequence is Methyltransferase-like protein 22 (404 aa).

2 disordered regions span residues 60–102 (TDSG…SLQA) and 115–145 (QLDEDGDLDVVRRPRAASDSNPAGPLRDKVH). The span at 68 to 78 (SHRDVHTKEPP) shows a compositional bias: basic and acidic residues. Low complexity predominate over residues 79 to 88 (SAETGSTGSP). S132 is modified (phosphoserine).

It belongs to the methyltransferase superfamily. METTL22 family. In terms of assembly, interacts with members of the heat shock protein 90 and 70 families; these proteins probably are methylation substrates.

The protein resides in the nucleus. It catalyses the reaction L-lysyl-[protein] + 3 S-adenosyl-L-methionine = N(6),N(6),N(6)-trimethyl-L-lysyl-[protein] + 3 S-adenosyl-L-homocysteine + 3 H(+). In terms of biological role, protein N-lysine methyltransferase. Trimethylates KIN at Lys-135 (in vitro). This Homo sapiens (Human) protein is Methyltransferase-like protein 22 (METTL22).